The primary structure comprises 217 residues: Thymidylate kinase (217 aa).

7 to 14 is a binding site for ATP; it reads GIEGAGKS.

Belongs to the thymidylate kinase family.

The catalysed reaction is dTMP + ATP = dTDP + ADP. Phosphorylation of dTMP to form dTDP in both de novo and salvage pathways of dTTP synthesis. This is Thymidylate kinase from Desulfovibrio desulfuricans (strain ATCC 27774 / DSM 6949 / MB).